The primary structure comprises 409 residues: MPDDLLNSFMTGPDEKGRFGDFGGRFVSETLMPLILELEQQYEHAKTDDSFWAEMQDLWTHYVGRPSPLYFAKRLTERLGGAKIYLKRDELNHTGAHKINNVLGQIILARRMGKTRIIAETGAGQHGVATATVCAKFGLKCIVYMGATDVERQAPNVFRMKLLGAEVVPVTSGRGTLKDAMNDALRDWVTNVRDTFYCIGTVAGPHPYPAMVRDFQAIIGKETRDQMMAAEGRLPDTLIAAIGGGSNAMGLFFPFLDDKSVNIIGVEAGGHGVNEKMEHCASLTGGRPGVLHGNRTYLLQDEDGQILEGHSISAGLDYPGIGPEHAWLHEIGRAQYVSITDREALDAFQLSCETEGIIPALEPSHALAHVCKIAPDMPRDHLLVMNMCGRGDKDIFTVARALGWDMDGA.

Lysine 98 bears the N6-(pyridoxal phosphate)lysine mark.

The protein belongs to the TrpB family. Tetramer of two alpha and two beta chains. The cofactor is pyridoxal 5'-phosphate.

The enzyme catalyses (1S,2R)-1-C-(indol-3-yl)glycerol 3-phosphate + L-serine = D-glyceraldehyde 3-phosphate + L-tryptophan + H2O. It participates in amino-acid biosynthesis; L-tryptophan biosynthesis; L-tryptophan from chorismate: step 5/5. Its function is as follows. The beta subunit is responsible for the synthesis of L-tryptophan from indole and L-serine. The polypeptide is Tryptophan synthase beta chain (Jannaschia sp. (strain CCS1)).